A 237-amino-acid chain; its full sequence is MKHSYFISDLHLSETQPELTALFVDFMQNLAPQAERLYILGDLFDFWIGDDEQSTLIQQVKDLIKSVSNQGVQCYFQHGNRDFLIGERFSKETGAQLLPDYQLITLYDKKILLCHGDTLCIDDVAYQQFRRRVHQKWLQRLFLCLPLKVRLKIAEKIRAKSNQDKQAKSQEIMDINQAFTTEKVQEFGVNLLIHGHTHREAIHQQEGFTRIVLGDWRKNYASILKMDESGEFGFIKD.

Positions 9, 11, 42, 80, and 115 each coordinate Mn(2+). 80–81 serves as a coordination point for substrate; it reads NR. Positions 123, 161, 165, 168, and 196 each coordinate substrate. Positions 196 and 198 each coordinate Mn(2+).

Belongs to the LpxH family. Mn(2+) serves as cofactor.

It is found in the cell inner membrane. The enzyme catalyses UDP-2-N,3-O-bis[(3R)-3-hydroxytetradecanoyl]-alpha-D-glucosamine + H2O = 2-N,3-O-bis[(3R)-3-hydroxytetradecanoyl]-alpha-D-glucosaminyl 1-phosphate + UMP + 2 H(+). It functions in the pathway glycolipid biosynthesis; lipid IV(A) biosynthesis; lipid IV(A) from (3R)-3-hydroxytetradecanoyl-[acyl-carrier-protein] and UDP-N-acetyl-alpha-D-glucosamine: step 4/6. Functionally, hydrolyzes the pyrophosphate bond of UDP-2,3-diacylglucosamine to yield 2,3-diacylglucosamine 1-phosphate (lipid X) and UMP by catalyzing the attack of water at the alpha-P atom. Involved in the biosynthesis of lipid A, a phosphorylated glycolipid that anchors the lipopolysaccharide to the outer membrane of the cell. This Haemophilus influenzae (strain PittGG) protein is UDP-2,3-diacylglucosamine hydrolase.